The primary structure comprises 64 residues: Cytochrome c oxidase subunit 5C-2 (64 aa).

The helical transmembrane segment at 15-34 (SVVKELVIGTVLGLAAGGLW) threads the bilayer.

The protein belongs to the cytochrome c oxidase subunit 5C family.

It is found in the mitochondrion inner membrane. Functionally, this protein is one of the nuclear-coded polypeptide chains of cytochrome c oxidase, the terminal oxidase in mitochondrial electron transport. This chain is Cytochrome c oxidase subunit 5C-2 (COX5C2), found in Helianthus annuus (Common sunflower).